Reading from the N-terminus, the 299-residue chain is NEDD8-activating enzyme E1 catalytic subunit (299 aa).

12 to 37 lines the ATP pocket; that stretch reads GLGCEILKNLTMLSFVKQVHIVDIDT. Cys168 acts as the Glycyl thioester intermediate in catalysis.

Belongs to the ubiquitin-activating E1 family. UBA3 subfamily. In terms of assembly, heterodimer of UBA3 and ULA1. Interacts with NEDD8 and UBC12.

The enzyme catalyses ATP + [NEDD8 protein] + [E1 NEDD8-activating enzyme]-L-cysteine = AMP + diphosphate + [E1 NEDD8-activating enzyme]-S-[NEDD8 protein]-yl-L-cysteine.. Its pathway is protein modification; protein neddylation. Functionally, catalytic subunit of the dimeric UBA3-ULA1 E1 enzyme. E1 activates NEDD8/RUB1 by first adenylating its C-terminal glycine residue with ATP, thereafter linking this residue to the side chain of the catalytic cysteine, yielding a NEDD8-UBA3 thioester and free AMP. E1 finally transfers NEDD8 to the catalytic cysteine of UBC12. The sequence is that of NEDD8-activating enzyme E1 catalytic subunit (UBA3) from Saccharomyces cerevisiae (strain ATCC 204508 / S288c) (Baker's yeast).